Reading from the N-terminus, the 265-residue chain is MADTQPAQEAPAADAPRAERNFGRGRGGRGGRGRGRGGPGEEKEWVPCTKLGRLVKAQKVTSLEEIFLFSMPIKEHQIVDTLIAEGKLHDEMMKIYPVQKATSAGQRTRFKAFNVVGDCDGHIGIGARVGKEVSLAIRASMIAAKLNIVPVRRGYWGNKIGEPHTIPMKVTGKCGSVAVRLVPAPRGTGIVAAPVPKKILEFAGVEDVYTSSRGKTRTHGNLIMATFYALRKTYGFLTPDLWADTEPSRDPTDEHGELLAEMTTA.

The span at 1 to 15 shows a compositional bias: low complexity; the sequence is MADTQPAQEAPAADA. A disordered region spans residues 1–44; it reads MADTQPAQEAPAADAPRAERNFGRGRGGRGGRGRGRGGPGEEKE. The span at 26–35 shows a compositional bias: basic residues; the sequence is RGGRGGRGRG. The 64-residue stretch at 88–151 folds into the S5 DRBM domain; it reads LHDEMMKIYP…IAAKLNIVPV (64 aa). Positions 245–265 are disordered; sequence TEPSRDPTDEHGELLAEMTTA. Basic and acidic residues predominate over residues 246–258; the sequence is EPSRDPTDEHGEL.

The protein belongs to the universal ribosomal protein uS5 family.

Component of the ribosome, a large ribonucleoprotein complex responsible for the synthesis of proteins in the cell. The small ribosomal subunit (SSU) binds messenger RNAs (mRNAs) and translates the encoded message by selecting cognate aminoacyl-transfer RNA (tRNA) molecules. The large subunit (LSU) contains the ribosomal catalytic site termed the peptidyl transferase center (PTC), which catalyzes the formation of peptide bonds, thereby polymerizing the amino acids delivered by tRNAs into a polypeptide chain. The nascent polypeptides leave the ribosome through a tunnel in the LSU and interact with protein factors that function in enzymatic processing, targeting, and the membrane insertion of nascent chains at the exit of the ribosomal tunnel. Plays a role in the assembly and function of the 40S ribosomal subunit. Mutations in this protein affects the control of translational fidelity. Involved in nucleolar processing of pre-18S ribosomal RNA and ribosome assembly. The chain is Small ribosomal subunit protein uS5 from Leishmania amazonensis.